The primary structure comprises 242 residues: Terpene cyclase dpchB (242 aa).

7 consecutive transmembrane segments (helical) span residues 16 to 36 (VVWIADTCKLIMGIGWTANYV), 51 to 71 (ALLPLCCNFAWELTYAIMYAF), 78 to 95 (YVHFSGLLLNCGVMYTAV), 114 to 134 (LIFVLAVAGFASAHVVLAKQV), 141 to 161 (AWSAYACQLLLSVGGLCQLLC), 169 to 189 (SYFLWFSRFFGSLVLVPQDII), and 207 to 227 (IWFVTIFLILDGSYGLCLWYV).

It belongs to the paxB family.

Its subcellular location is the membrane. It participates in secondary metabolite biosynthesis; terpenoid biosynthesis. Functionally, terpene cyclase; part of the gene cluster that mediates the biosynthesis of the diterpenoid pyrones higginsianins A and B. The first step of the pathway is the synthesis of the alpha-pyrone moiety by the polyketide synthase dpchA via condensation of one acetyl-CoA starter unit with 3 malonyl-CoA units and 2 methylations. The alpha-pyrone is then combined with geranylgeranyl pyrophosphate (GGPP) formed by the GGPP synthase dpchD through the action of the prenyltransferase dpchC to yield a linear alpha-pyrone diterpenoid. Subsequent steps in the diterpenoid pyrone biosynthetic pathway involve the decalin core formation, which is initiated by the epoxidation of the C10-C11 olefin by the FAD-dependent oxidoreductase dpchE, and is followed by a cyclization cascade catalyzed by the terpene cyclase dpchB. The short chain dehydrogenase/reductase dpchG then oxidizes the 8S hydroxy group to a ketone and the short chain dehydrogenase/reductase dpchH reduces the ketone to the 8R hydroxy group to yield higginsianin B. Finally, the FAD-dependent oxidoreductase dpchF converts higginsianin B into higginsianin A. The sequence is that of Terpene cyclase dpchB from Colletotrichum higginsianum (strain IMI 349063) (Crucifer anthracnose fungus).